A 358-amino-acid polypeptide reads, in one-letter code: Insulin gene enhancer protein ISL-2A (358 aa).

LIM zinc-binding domains lie at Cys27–Asp80 and Cys89–His143. Positions Thr190–Ser249 form a DNA-binding region, homeobox. A compositionally biased stretch (low complexity) spans Glu325–Ser335. Residues Glu325–Thr358 are disordered. The span at Asp336–Thr358 shows a compositional bias: polar residues.

It localises to the nucleus. Binds to one of the cis-acting domain of the insulin gene enhancer. May be involved in subtype specialization of primary motoneurons. This chain is Insulin gene enhancer protein ISL-2A (isl2a), found in Oncorhynchus tshawytscha (Chinook salmon).